Here is a 131-residue protein sequence, read N- to C-terminus: Large ribosomal subunit protein bL12 (131 aa).

It belongs to the bacterial ribosomal protein bL12 family. In terms of assembly, homodimer. Part of the ribosomal stalk of the 50S ribosomal subunit. Forms a multimeric L10(L12)X complex, where L10 forms an elongated spine to which 2 to 4 L12 dimers bind in a sequential fashion. Binds GTP-bound translation factors.

Forms part of the ribosomal stalk which helps the ribosome interact with GTP-bound translation factors. Is thus essential for accurate translation. The sequence is that of Large ribosomal subunit protein bL12 from Prochlorococcus marinus (strain NATL1A).